Reading from the N-terminus, the 1004-residue chain is 2-oxoglutarate dehydrogenase E1 component (1004 aa).

The protein belongs to the alpha-ketoglutarate dehydrogenase family. As to quaternary structure, homodimer. Part of the 2-oxoglutarate dehydrogenase (OGDH) complex composed of E1 (2-oxoglutarate dehydrogenase), E2 (dihydrolipoamide succinyltransferase) and E3 (dihydrolipoamide dehydrogenase); the complex contains multiple copies of the three enzymatic components (E1, E2 and E3). Thiamine diphosphate serves as cofactor.

The enzyme catalyses N(6)-[(R)-lipoyl]-L-lysyl-[protein] + 2-oxoglutarate + H(+) = N(6)-[(R)-S(8)-succinyldihydrolipoyl]-L-lysyl-[protein] + CO2. Functionally, E1 component of the 2-oxoglutarate dehydrogenase (OGDH) complex which catalyzes the decarboxylation of 2-oxoglutarate, the first step in the conversion of 2-oxoglutarate to succinyl-CoA and CO(2). The protein is 2-oxoglutarate dehydrogenase E1 component of Brucella melitensis biotype 2 (strain ATCC 23457).